The primary structure comprises 251 residues: Triosephosphate isomerase (251 aa).

Residue 12-14 (NWK) coordinates substrate. H99 (electrophile) is an active-site residue. E169 (proton acceptor) is an active-site residue. Substrate contacts are provided by residues G175, S214, and 235–236 (GG).

Belongs to the triosephosphate isomerase family. As to quaternary structure, homodimer.

Its subcellular location is the cytoplasm. The enzyme catalyses D-glyceraldehyde 3-phosphate = dihydroxyacetone phosphate. Its pathway is carbohydrate biosynthesis; gluconeogenesis. The protein operates within carbohydrate degradation; glycolysis; D-glyceraldehyde 3-phosphate from glycerone phosphate: step 1/1. Its function is as follows. Involved in the gluconeogenesis. Catalyzes stereospecifically the conversion of dihydroxyacetone phosphate (DHAP) to D-glyceraldehyde-3-phosphate (G3P). This chain is Triosephosphate isomerase, found in Bradyrhizobium sp. (strain ORS 278).